The sequence spans 315 residues: Protein FRA10AC1 homolog (315 aa).

M1 bears the N-acetylmethionine mark. The interval 1–28 (MHGHGGYDSDFSDDEQGGGSSKKRKKTV) is disordered. Residues S9 and S12 each carry the phosphoserine modification. At K36 the chain carries N6-acetyllysine. The segment covering 225 to 235 (KEIKSTKKKSK) has biased composition (basic residues). The interval 225 to 308 (KEIKSTKKKS…EKSQEEEFDD (84 aa)) is disordered. Composition is skewed to basic and acidic residues over residues 236-245 (TTPECDESPR) and 255-278 (EASKGKDEGHSSSKKSEDSRNRNA). Phosphoserine is present on residues S283 and S285.

In terms of assembly, interacts with ESS2.

The protein resides in the nucleus. May be involved in pre-mRNA splicing. The sequence is that of Protein FRA10AC1 homolog (Fra10ac1) from Mus musculus (Mouse).